We begin with the raw amino-acid sequence, 1804 residues long: Collagen alpha-1(XI) chain (1804 aa).

Positions M1–G34 are cleaved as a signal peptide. A propeptide spans A35–E511 (N-terminal propeptide). Disulfide bonds link C60–C242 and C181–C235. Positions D70–C242 constitute a Laminin G-like domain. The tract at residues K229–H417 is nonhelical region. The span at Y315–P329 shows a compositional bias: polar residues. Disordered stretches follow at residues Y315–E334 and E433–T506. The triple-helical region (interrupted) stretch occupies residues G418–T506. Positions G440–G488 constitute a Collagen-like 1 domain. Low complexity-rich tracts occupy residues P447–D465 and L477–P494. The short nonhelical segment stretch occupies residues I507 to A509. Residues Q510–G527 are telopeptide. Residues R526–I1567 form a disordered region. Collagen-like domains follow at residues G527–G584 and P567–G623. Positions P528–V1540 are triple-helical region. Composition is skewed to gly residues over residues G539–G548 and G581–G590. K610 is subject to Allysine. Low complexity predominate over residues P639–R655. Pro residues predominate over residues Q697–P708. Low complexity predominate over residues Q715 to A726. The Collagen-like 4 domain occupies G728–D781. The span at R805 to K814 shows a compositional bias: basic and acidic residues. 3 stretches are compositionally biased toward low complexity: residues K873–K901, R916–V925, and P969–I979. Positions G1040–G1049 are enriched in gly residues. A compositionally biased stretch (pro residues) spans R1074–P1083. The span at A1084–V1108 shows a compositional bias: low complexity. Residues G1160–G1169 show a composition bias toward gly residues. The segment covering M1216–P1227 has biased composition (pro residues). Low complexity-rich tracts occupy residues P1240–V1249 and A1282–P1296. The span at Q1341 to R1360 shows a compositional bias: pro residues. Low complexity-rich tracts occupy residues A1383 to P1392 and Q1417 to D1426. Collagen-like domains lie at G1427–A1482 and G1481–E1539. Over residues P1428 to L1437 the composition is skewed to pro residues. K1450 is modified (allysine). Residues P1453–P1462 are compositionally biased toward low complexity. Over residues G1481 to G1490 the composition is skewed to gly residues. The segment covering P1491–A1507 has biased composition (pro residues). The segment covering P1509–T1519 has biased composition (low complexity). A compositionally biased stretch (pro residues) spans P1528–P1537. Residues I1541–G1561 are nonhelical region (C-terminal). Residues D1562–G1804 constitute a propeptide, C-terminal propeptide. A Fibrillar collagen NC1 domain is found at E1575–L1803. A disulfide bond links C1605 and C1637. Ca(2+) is bound by residues D1623, N1625, Q1626, C1628, and D1631. A glycan (N-linked (GlcNAc...) asparagine) is linked at N1638. 2 cysteine pairs are disulfide-bonded: C1646–C1801 and C1712–C1755.

It belongs to the fibrillar collagen family. Trimers composed of three different chains: alpha 1(XI), alpha 2(XI), and alpha 3(XI). Alpha 3(XI) is a post-translational modification of alpha 1(II). Alpha 1(V) can also be found instead of alpha 3(XI)=1(II). Post-translationally, prolines at the third position of the tripeptide repeating unit (G-X-Y) are hydroxylated in some or all of the chains. N-glycosylated.

The protein resides in the secreted. It is found in the extracellular space. The protein localises to the extracellular matrix. Its function is as follows. May play an important role in fibrillogenesis by controlling lateral growth of collagen II fibrils. The polypeptide is Collagen alpha-1(XI) chain (Col11a1) (Mus musculus (Mouse)).